Consider the following 333-residue polypeptide: Autoinducer 2 import system permease protein LsrD (333 aa).

10 consecutive transmembrane segments (helical) span residues 7 to 27, 45 to 65, 67 to 87, 90 to 110, 118 to 138, 162 to 182, 212 to 232, 240 to 260, 261 to 281, and 288 to 308; these read YGWELTLAALLVLEILLFGLS, ICIGIVALPLTMVIVSGGIDI, FGSTIGLCAIFLGIVFQAGVP, VAIPLTVLVGALCGLINAGLI, LVITLGTLYLFGGSALLLSGL, LFGLPIPLVIFMLCVLLFWLL, TLCMLYAMTGVASAISAILLV, SDLGASFLMPAITAVVLGGAN, IYGGSGSILGTALAVLLVGYL, and IGTPNQISSALSGALLILVVV.

The protein belongs to the binding-protein-dependent transport system permease family. AraH/RbsC subfamily. In terms of assembly, the complex is composed of two ATP-binding proteins (LsrA), two transmembrane proteins (LsrC and LsrD) and a solute-binding protein (LsrB).

Its subcellular location is the cell inner membrane. Part of the ABC transporter complex LsrABCD involved in autoinducer 2 (AI-2) import. Probably responsible for the translocation of the substrate across the membrane. The sequence is that of Autoinducer 2 import system permease protein LsrD (lsrD) from Yersinia pestis bv. Antiqua (strain Antiqua).